The following is an 896-amino-acid chain: Translation initiation factor IF-2 (896 aa).

Positions 46–315 are disordered; the sequence is LAHLNRQHGG…FNKPAQPVER (270 aa). The segment covering 99-247 has biased composition (basic and acidic residues); the sequence is SASEEQEREE…RKQQEKEDVH (149 aa). Residues 269–278 are compositionally biased toward basic residues; sequence SRKRGKKRRR. The segment covering 279–288 has biased composition (basic and acidic residues); it reads KDEESDDTPR. Residues 396–565 enclose the tr-type G domain; it reads PRAPVVTVMG…LLQSEVLDLR (170 aa). Positions 405–412 are G1; sequence GHVDHGKT. 405–412 is a binding site for GTP; the sequence is GHVDHGKT. The interval 430–434 is G2; that stretch reads GITQH. The interval 451–454 is G3; sequence DTPG. GTP-binding positions include 451–455 and 505–508; these read DTPGH and NKMD. Positions 505 to 508 are G4; the sequence is NKMD. The segment at 541–543 is G5; the sequence is SAH.

This sequence belongs to the TRAFAC class translation factor GTPase superfamily. Classic translation factor GTPase family. IF-2 subfamily.

Its subcellular location is the cytoplasm. Its function is as follows. One of the essential components for the initiation of protein synthesis. Protects formylmethionyl-tRNA from spontaneous hydrolysis and promotes its binding to the 30S ribosomal subunits. Also involved in the hydrolysis of GTP during the formation of the 70S ribosomal complex. In Idiomarina loihiensis (strain ATCC BAA-735 / DSM 15497 / L2-TR), this protein is Translation initiation factor IF-2.